The chain runs to 347 residues: NADH-ubiquinone oxidoreductase chain 2 (347 aa).

The next 11 helical transmembrane spans lie at 3 to 23 (PVVL…VMTT), 25 to 45 (HWLL…PILM), 59 to 79 (YFLT…INLI), 96 to 116 (IIMT…FWVP), 122 to 142 (IQLS…MSIL), 149 to 169 (INLH…GWGG), 178 to 198 (IMAY…IYNP), 200 to 220 (MALL…MTFM), 237 to 257 (MPLL…LPPL), 274 to 294 (NSII…FFYM), and 325 to 345 (LLSP…MLAL).

The protein belongs to the complex I subunit 2 family. In terms of assembly, core subunit of respiratory chain NADH dehydrogenase (Complex I) which is composed of 45 different subunits. Interacts with TMEM242.

It localises to the mitochondrion inner membrane. The enzyme catalyses a ubiquinone + NADH + 5 H(+)(in) = a ubiquinol + NAD(+) + 4 H(+)(out). Functionally, core subunit of the mitochondrial membrane respiratory chain NADH dehydrogenase (Complex I) which catalyzes electron transfer from NADH through the respiratory chain, using ubiquinone as an electron acceptor. Essential for the catalytic activity and assembly of complex I. This Paranyctimene raptor (Unstriped tube-nosed fruit bat) protein is NADH-ubiquinone oxidoreductase chain 2.